The following is a 244-amino-acid chain: rRNA adenine N-6-methyltransferase (244 aa).

Residues N11, I13, G38, E59, D84, and N101 each coordinate S-adenosyl-L-methionine.

The protein belongs to the class I-like SAM-binding methyltransferase superfamily. rRNA adenine N(6)-methyltransferase family.

It catalyses the reaction adenosine(2085) in 23S rRNA + 2 S-adenosyl-L-methionine = N(6)-dimethyladenosine(2085) in 23S rRNA + 2 S-adenosyl-L-homocysteine + 2 H(+). In terms of biological role, this protein produces a dimethylation of the adenine residue at position 2085 in 23S rRNA, resulting in reduced affinity between ribosomes and macrolide-lincosamide-streptogramin B antibiotics. Is involved in erythromycin resistance. The sequence is that of rRNA adenine N-6-methyltransferase (ermGT) from Limosilactobacillus reuteri (Lactobacillus reuteri).